We begin with the raw amino-acid sequence, 55 residues long: Beta-toxin Cn7 (55 aa).

Positions 1-55 (KEGYIVNYHDGCKYECYKLGDNDYCLRECKLRVGKGAGGYCYAFACWCTHLYEQA) constitute an LCN-type CS-alpha/beta domain. Intrachain disulfides connect Cys-16–Cys-41, Cys-25–Cys-46, and Cys-29–Cys-48.

This sequence belongs to the long (3 C-C) scorpion toxin superfamily. Sodium channel inhibitor family. Beta subfamily. Expressed by the venom gland.

It localises to the secreted. Beta toxins bind voltage-independently at site-4 of sodium channels (Nav) and shift the voltage of activation toward more negative potentials thereby affecting sodium channel activation and promoting spontaneous and repetitive firing. The protein is Beta-toxin Cn7 of Centruroides noxius (Mexican scorpion).